A 137-amino-acid chain; its full sequence is Phosphoribosyl-AMP cyclohydrolase (137 aa).

Mg(2+) is bound at residue D84. Residue C85 coordinates Zn(2+). Residues D86 and D88 each contribute to the Mg(2+) site. Residues C101 and C108 each coordinate Zn(2+).

The protein belongs to the PRA-CH family. As to quaternary structure, homodimer. Mg(2+) serves as cofactor. Requires Zn(2+) as cofactor.

It localises to the cytoplasm. The catalysed reaction is 1-(5-phospho-beta-D-ribosyl)-5'-AMP + H2O = 1-(5-phospho-beta-D-ribosyl)-5-[(5-phospho-beta-D-ribosylamino)methylideneamino]imidazole-4-carboxamide. It functions in the pathway amino-acid biosynthesis; L-histidine biosynthesis; L-histidine from 5-phospho-alpha-D-ribose 1-diphosphate: step 3/9. Its function is as follows. Catalyzes the hydrolysis of the adenine ring of phosphoribosyl-AMP. The polypeptide is Phosphoribosyl-AMP cyclohydrolase (Chlorobaculum parvum (strain DSM 263 / NCIMB 8327) (Chlorobium vibrioforme subsp. thiosulfatophilum)).